The following is a 284-amino-acid chain: Protein phosphatase 1 regulatory subunit 3B (284 aa).

The PP1-binding motif signature appears at 61 to 64; that stretch reads RVSF. In terms of domain architecture, CBM21 spans 124-232; the sequence is RNRLQTDHVC…SNKGKNYRII (109 aa). S260 bears the Phosphoserine mark.

As to quaternary structure, interacts with glycogen, PPP1CC catalytic subunit of PP1 and PYGL. Associates with glycogen particles. Forms complexes with debranching enzyme, glycogen phosphorylase, glycogen synthase and phosphorylase kinase which is necessary for its regulation of PP1 activity.

Functionally, acts as a glycogen-targeting subunit for phosphatase PP1. Facilitates interaction of the PP1 with enzymes of the glycogen metabolism and regulates its activity. Suppresses the rate at which PP1 dephosphorylates (inactivates) glycogen phosphorylase and enhances the rate at which it activates glycogen synthase and therefore limits glycogen breakdown. Its activity is inhibited by PYGL, resulting in inhibition of the glycogen synthase and glycogen phosphorylase phosphatase activities of PP1. Dramatically increases basal and insulin-stimulated glycogen synthesis upon overexpression in hepatocytes. This Bos taurus (Bovine) protein is Protein phosphatase 1 regulatory subunit 3B (PPP1R3B).